A 367-amino-acid polypeptide reads, in one-letter code: Phospho-N-acetylmuramoyl-pentapeptide-transferase (367 aa).

10 consecutive transmembrane segments (helical) span residues 34–54 (GAVV…IDHL), 78–98 (TPTM…VLWA), 101–121 (LNPY…VGFY), 135–155 (FGSK…CYAL), 175–195 (TVLH…VGAG), 206–226 (GLAI…AYLA), 246–266 (LAVL…FNAP), 270–290 (IFMG…IAVA), 295–315 (IVLA…IVQV), and 344–364 (QIVI…LSTL).

Belongs to the glycosyltransferase 4 family. MraY subfamily. Mg(2+) is required as a cofactor.

The protein localises to the cell inner membrane. The enzyme catalyses UDP-N-acetyl-alpha-D-muramoyl-L-alanyl-gamma-D-glutamyl-meso-2,6-diaminopimeloyl-D-alanyl-D-alanine + di-trans,octa-cis-undecaprenyl phosphate = di-trans,octa-cis-undecaprenyl diphospho-N-acetyl-alpha-D-muramoyl-L-alanyl-D-glutamyl-meso-2,6-diaminopimeloyl-D-alanyl-D-alanine + UMP. It functions in the pathway cell wall biogenesis; peptidoglycan biosynthesis. Catalyzes the initial step of the lipid cycle reactions in the biosynthesis of the cell wall peptidoglycan: transfers peptidoglycan precursor phospho-MurNAc-pentapeptide from UDP-MurNAc-pentapeptide onto the lipid carrier undecaprenyl phosphate, yielding undecaprenyl-pyrophosphoryl-MurNAc-pentapeptide, known as lipid I. This Bradyrhizobium diazoefficiens (strain JCM 10833 / BCRC 13528 / IAM 13628 / NBRC 14792 / USDA 110) protein is Phospho-N-acetylmuramoyl-pentapeptide-transferase.